Here is a 1687-residue protein sequence, read N- to C-terminus: Genome polyprotein (1687 aa).

Over residues 1-13 (MRMATPSSAPSVR) the composition is skewed to polar residues. Positions 1 to 56 (MRMATPSSAPSVRNTEKRKNKKASSKASVSFGAPSPLSSESEDEINYMTPPEQEAQ) are disordered. Positions 1 to 116 (MRMATPSSAP…FRRYPHLRPK (116 aa)) are interaction with host MAP1LC3A/LC3. The tract at residues 117–341 (EDRPDAPSHA…ISIFGEWQAE (225 aa)) is interaction with NTPase. The interaction with NS4 stretch occupies residues 244-341 (SPVQDWNVDP…ISIFGEWQAE (98 aa)). 2 host ER membrane association regions span residues 261 to 292 (KLRM…KPLN) and 302 to 341 (WTFS…WQAE). The interval 342–518 (GPFDLALDVV…GKTCFCQNLA (177 aa)) is interaction with NS1-2, NS4 and homooligomerization. The region spanning 476–641 (RISMARAAFE…DDARARAPGD (166 aa)) is the SF3 helicase domain. 504–511 (GRPGIGKT) contacts ATP. Residues 595–700 (VIIITTNQQT…AVALVHERHD (106 aa)) form an important for mitochondrion targeting region. Residues 893-898 (DEEYDE) form an acidic region. At tyrosine 896 the chain carries O-(5'-phospho-RNA)-tyrosine. An interaction with host EIF4G region spans residues 978 to 994 (WADDDRQVDYGEKINFE). Residues 995–1172 (APVSIWSRVV…AATHGEPTLE (178 aa)) form the Peptidase C37 domain. Catalysis depends on for 3CLpro activity residues histidine 1024, aspartate 1048, and cysteine 1133. A RdRp catalytic domain is found at 1416-1537 (RYHMDADYTR…STNLELDMVK (122 aa)). Residues aspartate 1420 and aspartate 1422 each contribute to the Mg(2+) site. Cysteine 1482 and cysteine 1484 are disulfide-bonded. 3 residues coordinate Mg(2+): aspartate 1524, glutamate 1525, and serine 1569.

As to quaternary structure, homodimer. Interacts with NTPase; this interaction increases the proapoptotic activity of the NTPase and is crucial for the formation of the viral replication complex. Interacts with NS4; this interaction is crucial for the formation of the viral replication complex. Interacts (via N-terminus) with host VAPA. Interacts with host VAPB. In terms of assembly, monomer. Homooligomer. Interacts with NS1-2; this interaction increases the proapoptotic activity of the NTPase and is crucial for the formation of the viral replication complex. Interacts with NS4; this interaction increases the proapoptotic activity of the NTPase. Interacts with host G3BP1; this interaction leads to the redistribution of G3BP1 and its cellular partners to the viral replication complexes, thereby preventing the assembly of stress granules. As to quaternary structure, homodimer. Monomer; in solution. In terms of assembly, interacts with NTPase; this interaction increases the proapoptotic activity of the NTPase. Interacts with NS1-2; this interaction is crucial for the formation of the viral replication complex. Monomer. Interacts with the RNA-directed RNA polymerase; this interaction induces the multimerization of the RdRp and enhances its activity. Interacts with host IEF4E; this interaction plays a role in translation of viral proteins. Interacts (via C-terminus) with host IEF4G1 (via central domain); this interaction plays a role in translation of viral proteins. As to quaternary structure, homohexamer; also forms fibrous hexameric oligomer. Interacts with the viral genome-linked protein; this interaction induces the multimerization of the RdRp and enhances its activity. Mg(2+) is required as a cofactor. Requires Mn(2+) as cofactor. In terms of processing, specific enzymatic cleavages in vivo yield mature proteins. 3CLpro is first autocatalytically cleaved, then processes the whole polyprotein. Cleaved by host CASP3/caspase 3 at 18-22 h.p.i. The cleavage allows NS1 secretion, which is essential for intestinal infection and resistance to IFN-lambda. Post-translationally, VPg is uridylylated by the polymerase and is covalently attached to the 5'-end of the polyadenylated genomic and subgenomic RNAs. This uridylylated form acts as a nucleotide-peptide primer for the polymerase.

Its subcellular location is the host endoplasmic reticulum membrane. The protein resides in the secreted. The protein localises to the host endosome membrane. It is found in the host mitochondrion. It localises to the host cytoplasm. Its subcellular location is the host perinuclear region. It catalyses the reaction a ribonucleoside 5'-triphosphate + H2O = a ribonucleoside 5'-diphosphate + phosphate + H(+). The catalysed reaction is Endopeptidase with a preference for cleavage when the P1 position is occupied by Glu-|-Xaa and the P1' position is occupied by Gly-|-Yaa.. The enzyme catalyses RNA(n) + a ribonucleoside 5'-triphosphate = RNA(n+1) + diphosphate. Inhibited by Suramin, Suramin-related compounds and NF023. Inhibited by PPNDS. Functionally, induces the proliferation of the host smooth ER membranes forming long tubular structures. These remodeled membranes probably form the viral factories that contain the replication complex. May play a role in viral replication by interacting with host VAPA, a vesicle-associated membrane protein that plays a role in SNARE-mediated vesicle fusion. This interaction may target replication complex to intracellular membranes. Its function is as follows. Promotes intestinal tropism and persistent fecal shedding in strain CR6. This function requires Glu-94 and is present in persistant strains. Displays NTPase activity, but probably no helicase activity. Displays RNA chaperone-like activity and destabilizes dsRNA. Induces the formation of convoluted membranes derived from the host ER. These remodeled membranes probably form the viral factories that contain the replication complex. Initiates host cell death by targeting the mitochondrial outer membrane, leading to the permeabilization of mitochondria, programmed host cell death and viral egress. Externalization of host cardiolipin seems to be involved in the process. Probably plays a role in preventing the assembly of host stress granules. In terms of biological role, probable key protein responsible for the formation of membrane alterations by the virus. Induces the formation of convoluted membranes derived from the host ER. These remodeled membranes probably form the viral factories that contain the replication complex. May play a role in targeting replication complex to intracellular membranes. Functionally, viral genome-linked protein is covalently linked to the 5'-end of the positive-strand, negative-strand genomic RNAs and subgenomic RNA. Acts as a genome-linked replication primer. May recruit ribosome to viral RNA thereby promoting viral proteins translation. Interacts with host translation initiation complex to allow the translation of viral proteins. Induces the formation of aggregates of RNA-directed RNA polymerase in the presence of RNA. Through its interaction with the viral RNA-directed RNA polymerase, plays a crucial role in enhancing the polymerase activity. Its function is as follows. Processes the polyprotein. 3CLpro-RdRp is first released by autocleavage, then all other proteins are cleaved. May cleave host polyadenylate-binding protein thereby inhibiting cellular translation. Does not cleave host G3BP1. Replicates genomic and antigenomic RNA by recognizing replications specific signals. Also transcribes a subgenomic mRNA by initiating RNA synthesis internally on antigenomic RNA. This sgRNA codes for structural proteins. Catalyzes the covalent attachment VPg with viral RNAs. This is Genome polyprotein from Norovirus (isolate Mouse/NoV/United States/MNV1/2002/GV) (MNV-1).